The primary structure comprises 119 residues: Ribosome-binding factor A (119 aa).

It belongs to the RbfA family. As to quaternary structure, monomer. Binds 30S ribosomal subunits, but not 50S ribosomal subunits or 70S ribosomes.

It localises to the cytoplasm. Functionally, one of several proteins that assist in the late maturation steps of the functional core of the 30S ribosomal subunit. Associates with free 30S ribosomal subunits (but not with 30S subunits that are part of 70S ribosomes or polysomes). Required for efficient processing of 16S rRNA. May interact with the 5'-terminal helix region of 16S rRNA. In Chlorobium limicola (strain DSM 245 / NBRC 103803 / 6330), this protein is Ribosome-binding factor A.